A 310-amino-acid polypeptide reads, in one-letter code: Cytochrome f (310 aa).

The N-terminal stretch at 1-23 (MRRLIPILLGSLVLSLSILVAPA) is a signal peptide. Heme is bound by residues Tyr-28, Cys-48, Cys-51, and His-52. The helical transmembrane segment at 277–297 (IYGLLAFFVAVSLAQILLVLK) threads the bilayer.

Belongs to the cytochrome f family. As to quaternary structure, the 4 large subunits of the cytochrome b6-f complex are cytochrome b6, subunit IV (17 kDa polypeptide, PetD), cytochrome f and the Rieske protein, while the 4 small subunits are PetG, PetL, PetM and PetN. The complex functions as a dimer. The cofactor is heme.

It is found in the cellular thylakoid membrane. Its function is as follows. Component of the cytochrome b6-f complex, which mediates electron transfer between photosystem II (PSII) and photosystem I (PSI), cyclic electron flow around PSI, and state transitions. The polypeptide is Cytochrome f (Prochlorococcus marinus (strain MIT 9313)).